A 248-amino-acid polypeptide reads, in one-letter code: PF03932 family protein CutC (248 aa).

This sequence belongs to the CutC family. As to quaternary structure, homodimer.

Its subcellular location is the cytoplasm. The chain is PF03932 family protein CutC from Salmonella typhimurium (strain LT2 / SGSC1412 / ATCC 700720).